The chain runs to 161 residues: Nucleotide-binding protein Pput_4372 (161 aa).

It belongs to the YajQ family.

Its function is as follows. Nucleotide-binding protein. In Pseudomonas putida (strain ATCC 700007 / DSM 6899 / JCM 31910 / BCRC 17059 / LMG 24140 / F1), this protein is Nucleotide-binding protein Pput_4372.